Here is a 652-residue protein sequence, read N- to C-terminus: 2',3'-cyclic-nucleotide 2'-phosphodiesterase/3'-nucleotidase (652 aa).

An N-terminal signal peptide occupies residues 1-24 (MFKRPLTLSLLASLIALTTSTAQA). The a divalent metal cation site is built by Asp-36, His-38, Asp-81, Asn-121, His-230, His-262, and His-264. Substrate-binding positions include Tyr-445 and 549–555 (YRAYSGK).

Belongs to the 5'-nucleotidase family. It depends on a divalent metal cation as a cofactor.

The protein localises to the periplasm. The catalysed reaction is a nucleoside 2',3'-cyclic phosphate + H2O = a nucleoside 3'-phosphate + H(+). The enzyme catalyses a ribonucleoside 3'-phosphate + H2O = a ribonucleoside + phosphate. This bifunctional enzyme catalyzes two consecutive reactions during ribonucleic acid degradation. Converts a 2',3'-cyclic nucleotide to a 3'-nucleotide and then the 3'-nucleotide to the corresponding nucleoside and phosphate. The protein is 2',3'-cyclic-nucleotide 2'-phosphodiesterase/3'-nucleotidase (cpdB) of Yersinia enterocolitica.